The sequence spans 120 residues: Large ribosomal subunit protein uL24 (120 aa).

A disordered region spans residues 1–26 (MVRVISSQPRKQRKARYNAPHHMRGS). Basic residues predominate over residues 10–24 (RKQRKARYNAPHHMR).

Belongs to the universal ribosomal protein uL24 family. In terms of assembly, part of the 50S ribosomal subunit.

One of two assembly initiator proteins, it binds directly to the 5'-end of the 23S rRNA, where it nucleates assembly of the 50S subunit. Functionally, located at the polypeptide exit tunnel on the outside of the subunit. The protein is Large ribosomal subunit protein uL24 of Methanospirillum hungatei JF-1 (strain ATCC 27890 / DSM 864 / NBRC 100397 / JF-1).